A 597-amino-acid chain; its full sequence is ATP-dependent lipid A-core flippase (597 aa).

The next 6 helical transmembrane spans lie at 26-46, 76-96, 138-158, 164-184, 263-283, and 292-312; these read LWPY…AMAV, WFVP…QYAS, AIVF…VTLV, VVFL…IVAV, QPLT…IAVV, and VGGF…LKHL. An ABC transmembrane type-1 domain is found at 38–321; it reads IGAIVAMAVS…LMDVNQPLQR (284 aa). Positions 353 to 590 constitute an ABC transporter domain; that stretch reads VEFRDVSFVY…DGLYAHLHRI (238 aa). Residue 390–397 participates in ATP binding; the sequence is GPSGSGKT.

The protein belongs to the ABC transporter superfamily. Lipid exporter (TC 3.A.1.106) family. Homodimer.

The protein resides in the cell inner membrane. It carries out the reaction ATP + H2O + lipid A-core oligosaccharideSide 1 = ADP + phosphate + lipid A-core oligosaccharideSide 2.. Its function is as follows. Involved in lipopolysaccharide (LPS) biosynthesis. Translocates lipid A-core from the inner to the outer leaflet of the inner membrane. Transmembrane domains (TMD) form a pore in the inner membrane and the ATP-binding domain (NBD) is responsible for energy generation. This is ATP-dependent lipid A-core flippase from Paraburkholderia xenovorans (strain LB400).